We begin with the raw amino-acid sequence, 424 residues long: Serine hydroxymethyltransferase (424 aa).

Residues Leu-119 and 123–125 (GHL) each bind (6S)-5,6,7,8-tetrahydrofolate. Lys-228 bears the N6-(pyridoxal phosphate)lysine mark. 353-355 (SAF) lines the (6S)-5,6,7,8-tetrahydrofolate pocket.

The protein belongs to the SHMT family. As to quaternary structure, homodimer. Requires pyridoxal 5'-phosphate as cofactor.

The protein localises to the cytoplasm. It catalyses the reaction (6R)-5,10-methylene-5,6,7,8-tetrahydrofolate + glycine + H2O = (6S)-5,6,7,8-tetrahydrofolate + L-serine. It functions in the pathway one-carbon metabolism; tetrahydrofolate interconversion. It participates in amino-acid biosynthesis; glycine biosynthesis; glycine from L-serine: step 1/1. Its function is as follows. Catalyzes the reversible interconversion of serine and glycine with tetrahydrofolate (THF) serving as the one-carbon carrier. Also exhibits THF-independent aldolase activity toward beta-hydroxyamino acids, producing glycine and aldehydes, via a retro-aldol mechanism. The polypeptide is Serine hydroxymethyltransferase (Natronomonas pharaonis (strain ATCC 35678 / DSM 2160 / CIP 103997 / JCM 8858 / NBRC 14720 / NCIMB 2260 / Gabara) (Halobacterium pharaonis)).